Consider the following 317-residue polypeptide: Probable cell division protein WhiA (317 aa).

A DNA-binding region (H-T-H motif) is located at residues 275–308 (SLKELGEMLVPKVGKSGVNHRMRKIDELAEKLEE).

It belongs to the WhiA family.

Functionally, involved in cell division and chromosome segregation. The sequence is that of Probable cell division protein WhiA from Desulfitobacterium hafniense (strain DSM 10664 / DCB-2).